A 149-amino-acid polypeptide reads, in one-letter code: Large ribosomal subunit protein uL16 (149 aa).

Belongs to the universal ribosomal protein uL16 family. In terms of assembly, part of the 50S ribosomal subunit.

In terms of biological role, binds 23S rRNA and is also seen to make contacts with the A and possibly P site tRNAs. The chain is Large ribosomal subunit protein uL16 from Dehalococcoides mccartyi (strain ATCC BAA-2100 / JCM 16839 / KCTC 5957 / BAV1).